A 575-amino-acid chain; its full sequence is Membrane protein insertase YidC (575 aa).

6 helical membrane-spanning segments follow: residues 6-26 (VFLI…WGKD), 357-377 (FSIM…LHSF), 381-401 (WGWA…PLSA), 448-468 (GGCL…WVLV), 490-510 (PYFI…KLTP), and 526-546 (PLVF…YWVV).

The protein belongs to the OXA1/ALB3/YidC family. Type 1 subfamily. Interacts with the Sec translocase complex via SecD. Specifically interacts with transmembrane segments of nascent integral membrane proteins during membrane integration.

Its subcellular location is the cell inner membrane. In terms of biological role, required for the insertion and/or proper folding and/or complex formation of integral membrane proteins into the membrane. Involved in integration of membrane proteins that insert both dependently and independently of the Sec translocase complex, as well as at least some lipoproteins. Aids folding of multispanning membrane proteins. The polypeptide is Membrane protein insertase YidC (Xanthomonas campestris pv. campestris (strain B100)).